The chain runs to 464 residues: Protein FAM90A9 (464 aa).

Disordered regions lie at residues 1 to 42, 70 to 389, and 411 to 437; these read MMAR…DPRL, PATL…HDGA, and APSF…SEAP. 2 stretches are compositionally biased toward basic and acidic residues: residues 74-89 and 97-114; these read GKKE…KPRV and NKDK…DPQR. Residues 180 to 197 show a composition bias toward low complexity; sequence LASLSPLRKASLSSSSSL.

This sequence belongs to the FAM90 family.

This is Protein FAM90A9 (FAM90A9) from Homo sapiens (Human).